Reading from the N-terminus, the 330-residue chain is B-cell receptor CD22 (330 aa).

Residues 1–17 (MHLLGPWLLLLEYLAFS) form the signal peptide. Residues 18-136 (DSSKWAFEHP…MERIHLNVSE (119 aa)) form the Ig-like V-type domain. The Extracellular segment spans residues 18 to 330 (DSSKWAFEHP…VFLQVQYAPE (313 aa)). 3 disulfides stabilise this stretch: C37–C165, C42–C100, and C159–C217. N65, N99, and N110 each carry an N-linked (GlcNAc...) asparagine glycan. R118 contributes to the N-acetylneuraminate binding site. N-linked (GlcNAc...) asparagine glycans are attached at residues N133, N162, N187, and N229. 2 consecutive Ig-like C2-type domains span residues 141 to 233 (PHIQ…DTVQ) and 240 to 324 (PKLK…VFLQ). Cysteines 263 and 307 form a disulfide.

It belongs to the immunoglobulin superfamily. SIGLEC (sialic acid binding Ig-like lectin) family. Predominantly monomer of isoform CD22-beta. Also found as heterodimer of isoform CD22-beta and a shorter isoform. Interacts with PTPN6/SHP-1, LYN, SYK, PIK3R1/PIK3R2 and PLCG1 upon phosphorylation. Interacts with GRB2, INPP5D and SHC1 upon phosphorylation. May form a complex with INPP5D/SHIP, GRB2 and SHC1.

Its subcellular location is the cell membrane. Its function is as follows. Most highly expressed siglec (sialic acid-binding immunoglobulin-like lectin) on B-cells that plays a role in various aspects of B-cell biology including differentiation, antigen presentation, and trafficking to bone marrow. Binds to alpha 2,6-linked sialic acid residues of surface molecules such as CD22 itself, CD45 and IgM in a cis configuration. Can also bind to ligands on other cells as an adhesion molecule in a trans configuration. Acts as an inhibitory coreceptor on the surface of B-cells and inhibits B-cell receptor induced signaling, characterized by inhibition of the calcium mobilization and cellular activation. Mechanistically, the immunoreceptor tyrosine-based inhibitory motif domain is phosphorylated by the Src kinase LYN, which in turn leads to the recruitment of the protein tyrosine phosphatase 1/PTPN6, leading to the negative regulation of BCR signaling. If this negative signaling from is of sufficient strength, apoptosis of the B-cell can be induced. The chain is B-cell receptor CD22 from Pongo pygmaeus (Bornean orangutan).